Here is a 1214-residue protein sequence, read N- to C-terminus: Ubiquitin carboxyl-terminal hydrolase 36 (1214 aa).

A disordered region spans residues 124-169 (AVGSNGHDNNTVNGGTVNGNRKQTVDSGQSNQNSSANPNELPKPKR). The segment covering 132–143 (NNTVNGGTVNGN) has biased composition (low complexity). The span at 144-161 (RKQTVDSGQSNQNSSANP) shows a compositional bias: polar residues. In terms of domain architecture, USP spans 192 to 502 (AGMLNVGNTC…NAYIMFYELD (311 aa)). Catalysis depends on Cys-201, which acts as the Nucleophile. The Proton acceptor role is filled by His-461. The span at 509–523 (SSTINNNSSSSSNNS) shows a compositional bias: low complexity. The tract at residues 509-532 (SSTINNNSSSSSNNSVAPKLNGLR) is disordered. Phosphoserine occurs at positions 553 and 555. Disordered stretches follow at residues 631-819 (GEAA…KQKT), 836-964 (HRIA…ASKS), 977-1001 (QKLL…SESV), 1048-1161 (HGDT…PNFQ), and 1176-1214 (KFQQ…QQQS). The span at 633-651 (AAPNANTNANANKSSCNNN) shows a compositional bias: low complexity. The segment covering 666 to 685 (SDEDEDEDDSDDDDDDDDDD) has biased composition (acidic residues). Thr-717 bears the Phosphothreonine mark. A phosphoserine mark is found at Ser-727 and Ser-729. Low complexity-rich tracts occupy residues 735–751 (QQQQ…PQQL) and 785–816 (KTNG…NSSK). Polar residues predominate over residues 856–868 (EQVQTEQGTKKLN). Over residues 869–878 (SASSASASKS) the composition is skewed to low complexity. Phosphoserine is present on Ser-891. Position 894 is a phosphothreonine (Thr-894). Ser-897 is subject to Phosphoserine. Over residues 915–942 (DDDDEEDEEEDDVEADADQEDDDDEVVV) the composition is skewed to acidic residues. Thr-951 carries the phosphothreonine modification. A compositionally biased stretch (polar residues) spans 983–1001 (SAKSAATTRPGNGYQSESV). Residues 1058-1076 (NSSSNNSSNINSNSNSNSN) show a composition bias toward low complexity. The span at 1089 to 1098 (EAREQRKRDA) shows a compositional bias: basic and acidic residues. Composition is skewed to low complexity over residues 1178 to 1188 (QQQRALQRHLA) and 1197 to 1214 (QQQS…QQQS).

Belongs to the peptidase C19 family. Interacts with atms/PAF1, but not with CycT.

It localises to the nucleus. It is found in the nucleolus. The catalysed reaction is Thiol-dependent hydrolysis of ester, thioester, amide, peptide and isopeptide bonds formed by the C-terminal Gly of ubiquitin (a 76-residue protein attached to proteins as an intracellular targeting signal).. In terms of biological role, required for maintaining multiple types of adult stem cells, including male and female germline, epithelial follicle cell and intestinal stem cells. May function as a transcriptional repressor by continually deubiquiting histone H2B at the promoters of genes critical for cellular differentiation, thereby preventing histone H3 'Lys-4' trimethylation (H3K4). Controls selective autophagy activation by ubiquitinated proteins. The protein is Ubiquitin carboxyl-terminal hydrolase 36 (Usp36) of Drosophila virilis (Fruit fly).